The sequence spans 323 residues: Melanocortin receptor 3 (323 aa).

The Extracellular segment spans residues 1 to 37 (MNASCCLPSVQPTLPNGSEHLQAPFFSNQSSSAFCEQ). 3 N-linked (GlcNAc...) asparagine glycosylation sites follow: Asn2, Asn16, and Asn28. Residues 38-63 (VFIKPEVFLSLGIVSLLENILVILAV) form a helical membrane-spanning segment. Over 64–75 (VRNGNLHSPMYF) the chain is Cytoplasmic. Residues 76-100 (FLCSLAVADMLVSVSNALETIMIAI) form a helical membrane-spanning segment. The Extracellular portion of the chain corresponds to 101-118 (VHSDYLTFEDQFIQHMDN). The helical transmembrane segment at 119 to 140 (IFDSMICISLVASICNLLAIAV) threads the bilayer. The Cytoplasmic portion of the chain corresponds to 141–160 (DRYVTIFYALRYHSIMTVRK). Residues 161–181 (ALTLIVAIWVCCGVCGVVFIV) traverse the membrane as a helical segment. Residues 182 to 186 (YSESK) lie on the Extracellular side of the membrane. A helical membrane pass occupies residues 187 to 210 (MVIVCLITMFFAMMLLMGTLYVHM). Residues 211-245 (FLFARLHVKRIAALPPADGVAPQQHSCMKGAVTIT) are Cytoplasmic-facing. Residues 246 to 268 (ILLGVFIFCWAPFFLHLVLIITC) traverse the membrane as a helical segment. Residues 269–277 (PTNPYCICY) lie on the Extracellular side of the membrane. A helical transmembrane segment spans residues 278–301 (TAHFNTYLVLIMCNSVIDPLIYAF). The Cytoplasmic portion of the chain corresponds to 302 to 323 (RSLELRNTFREILCGCNGMNLG). Residue Cys315 is the site of S-palmitoyl cysteine attachment.

It belongs to the G-protein coupled receptor 1 family. Brain, placental, and gut tissues.

The protein resides in the cell membrane. Functionally, receptor for MSH (alpha, beta and gamma) and ACTH. This receptor is mediated by G proteins which activate adenylate cyclase. Required for expression of anticipatory patterns of activity and wakefulness during periods of limited nutrient availability and for the normal regulation of circadian clock activity in the brain. The chain is Melanocortin receptor 3 (MC3R) from Homo sapiens (Human).